The chain runs to 354 residues: MTALKNDRFLRALLKQPVDVTPVWMMRQAGRYLPEYRASRASAGDFMSLCKNPQFACEVTLQPLDRYPLDAAILFSDILTIPDAMGQGLYFETGEGPRFRKTVSTLADIEALPIPDAQQDLGYVMDAVSTIRRELNGRVPLIGFAGSPWTLATYMVEGGSSKDFRKSKAMLYDNPQAMHLLLDKLAQSVTSYLNGQILAGAQAVQIFDSWGGSLSSAAYQEFSLAYMRKIVSGLIRENDGRKVPVIVFTKGGGLWLESIADIGADTLGLDWTCDIGEARQRVGSKVSLQGNMDPTVLYARPEAIRQEVARILASYGSGTGHVFNLGHGITPEVDPANAGAFINAVHELSAQYHV.

Substrate contacts are provided by residues Arg-27–Arg-31, Asp-77, Tyr-154, Ser-209, and His-327.

This sequence belongs to the uroporphyrinogen decarboxylase family. In terms of assembly, homodimer.

It localises to the cytoplasm. It carries out the reaction uroporphyrinogen III + 4 H(+) = coproporphyrinogen III + 4 CO2. It functions in the pathway porphyrin-containing compound metabolism; protoporphyrin-IX biosynthesis; coproporphyrinogen-III from 5-aminolevulinate: step 4/4. Its function is as follows. Catalyzes the decarboxylation of four acetate groups of uroporphyrinogen-III to yield coproporphyrinogen-III. The polypeptide is Uroporphyrinogen decarboxylase (Pseudomonas syringae pv. syringae (strain B728a)).